The following is a 150-amino-acid chain: MKYQQLENLESGWKWKYLVKKHREGELITRYIEASAAQEAVDVLLSLENEPVLVNGWIDKHMNPELVNRMKQTIRARRKRHFNAEHQHTRKKSIDLEFIVWQRLAGLAQRRGKTLSETIVQLIEDAENKEKYANKMSSLKQDLQALLGKE.

The protein belongs to the MatP family. Homodimer.

It is found in the cytoplasm. Functionally, required for spatial organization of the terminus region of the chromosome (Ter macrodomain) during the cell cycle. Prevents early segregation of duplicated Ter macrodomains during cell division. Binds specifically to matS, which is a 13 bp signature motif repeated within the Ter macrodomain. This Shigella dysenteriae serotype 1 (strain Sd197) protein is Macrodomain Ter protein.